Here is a 403-residue protein sequence, read N- to C-terminus: Glutamyl-tRNA reductase 2 (403 aa).

Residues 47–50 (TCHR), Ser98, 103–105 (ETD), and Gln109 contribute to the substrate site. Cys48 functions as the Nucleophile in the catalytic mechanism. Position 177 to 182 (177 to 182 (GAGAVG)) interacts with NADP(+).

The protein belongs to the glutamyl-tRNA reductase family. Homodimer.

The catalysed reaction is (S)-4-amino-5-oxopentanoate + tRNA(Glu) + NADP(+) = L-glutamyl-tRNA(Glu) + NADPH + H(+). It participates in porphyrin-containing compound metabolism; protoporphyrin-IX biosynthesis; 5-aminolevulinate from L-glutamyl-tRNA(Glu): step 1/2. Catalyzes the NADPH-dependent reduction of glutamyl-tRNA(Glu) to glutamate 1-semialdehyde (GSA). This is Glutamyl-tRNA reductase 2 from Pyrobaculum arsenaticum (strain DSM 13514 / JCM 11321 / PZ6).